Reading from the N-terminus, the 217-residue chain is Meiotically up-regulated gene 37 protein (217 aa).

Has a role in meiosis. The polypeptide is Meiotically up-regulated gene 37 protein (mug37) (Schizosaccharomyces pombe (strain 972 / ATCC 24843) (Fission yeast)).